A 214-amino-acid polypeptide reads, in one-letter code: Transcriptional regulatory protein ComA (214 aa).

The 119-residue stretch at 3–121 folds into the Response regulatory domain; it reads KILVIDDHPA…KITQYIYHVL (119 aa). Aspartate 55 bears the 4-aspartylphosphate mark. In terms of domain architecture, HTH luxR-type spans 147 to 212; sequence SQKEQDVLTP…EAVLIAKSDG (66 aa). The H-T-H motif DNA-binding region spans 171-190; it reads NQEIADALHLSKRSIEYSLT.

Post-translationally, phosphorylated by ComP.

Its subcellular location is the cytoplasm. Functionally, response regulator in the two-component regulatory system ComP/ComA involved in a major quorum response pathway that regulates the development of genetic competence. Regulates directly the expression of over 20 genes, including genes of the srfA operon, degQ, rapA, rapC, rapE, rapF, etc. Regulates indirectly, through the regulation of comK transcription, the expression of late competence genes. This chain is Transcriptional regulatory protein ComA (comA), found in Bacillus subtilis (strain 168).